A 366-amino-acid polypeptide reads, in one-letter code: Chorismate synthase (366 aa).

The NADP(+) site is built by arginine 48 and arginine 54. Residues arginine 125–serine 127, asparagine 238–alanine 239, glycine 278, lysine 293–serine 297, and arginine 319 contribute to the FMN site.

This sequence belongs to the chorismate synthase family. As to quaternary structure, homotetramer. The cofactor is FMNH2.

The catalysed reaction is 5-O-(1-carboxyvinyl)-3-phosphoshikimate = chorismate + phosphate. The protein operates within metabolic intermediate biosynthesis; chorismate biosynthesis; chorismate from D-erythrose 4-phosphate and phosphoenolpyruvate: step 7/7. Catalyzes the anti-1,4-elimination of the C-3 phosphate and the C-6 proR hydrogen from 5-enolpyruvylshikimate-3-phosphate (EPSP) to yield chorismate, which is the branch point compound that serves as the starting substrate for the three terminal pathways of aromatic amino acid biosynthesis. This reaction introduces a second double bond into the aromatic ring system. The chain is Chorismate synthase from Burkholderia orbicola (strain MC0-3).